Here is a 781-residue protein sequence, read N- to C-terminus: DNA polymerase (781 aa).

Belongs to the DNA polymerase type-B family.

It carries out the reaction DNA(n) + a 2'-deoxyribonucleoside 5'-triphosphate = DNA(n+1) + diphosphate. The chain is DNA polymerase (pol) from Archaeoglobus fulgidus (strain ATCC 49558 / DSM 4304 / JCM 9628 / NBRC 100126 / VC-16).